A 258-amino-acid chain; its full sequence is MLKVRVIPCLDVKDGRVVKGVQFVDLRDAGDPVEAARAYDLAGADELTFLDITASHENRGTILDVVRRTAEQCFMPLTVGGGVRTVDDVRTLLHAGADKVSINTAAVNRRAFVGEAAEKFGEQCIVVAIDAKRVSKEGEENRWEIFTHGGRTPTGIDAIQFAREVVDLGAGEILLTSMDRDGTGQGFDCALTRAVADAVHVPVIASGGVGTLDHLVDGIREGGASAVLAASIFHFGTFTIREAKERLAEAGLPVRLDV.

Active-site residues include aspartate 11 and aspartate 130.

This sequence belongs to the HisA/HisF family. In terms of assembly, heterodimer of HisH and HisF.

The protein localises to the cytoplasm. The catalysed reaction is 5-[(5-phospho-1-deoxy-D-ribulos-1-ylimino)methylamino]-1-(5-phospho-beta-D-ribosyl)imidazole-4-carboxamide + L-glutamine = D-erythro-1-(imidazol-4-yl)glycerol 3-phosphate + 5-amino-1-(5-phospho-beta-D-ribosyl)imidazole-4-carboxamide + L-glutamate + H(+). Its pathway is amino-acid biosynthesis; L-histidine biosynthesis; L-histidine from 5-phospho-alpha-D-ribose 1-diphosphate: step 5/9. IGPS catalyzes the conversion of PRFAR and glutamine to IGP, AICAR and glutamate. The HisF subunit catalyzes the cyclization activity that produces IGP and AICAR from PRFAR using the ammonia provided by the HisH subunit. In Xanthobacter autotrophicus (strain ATCC BAA-1158 / Py2), this protein is Imidazole glycerol phosphate synthase subunit HisF.